The primary structure comprises 1502 residues: Rho GTPase-activating protein 5 (1502 aa).

FF domains lie at 267–325 (QLVV…HIEQ), 366–420 (KLME…HVQH), 427–481 (RVEM…HQRE), and 482–548 (IVEK…HIGF). Tyrosine 550 is modified (3'-nitrotyrosine). Residues serine 590 and serine 765 each carry the phosphoserine modification. Residues 590–763 (STNIDKVNLF…LESVKHNLDV (174 aa)) form the pG1 pseudoGTPase domain. The 166-residue stretch at 779–944 (RIVMCAMCGD…FSDVLEKKNM (166 aa)) folds into the pG2 pseudoGTPase domain. Phosphoserine is present on residues serine 951 and serine 968. Disordered stretches follow at residues 975–1004 (YNNY…LPTP), 1022–1050 (HSTP…PKTN), and 1069–1089 (NPRK…DPSD). Pro residues predominate over residues 1036–1045 (VPPPIKPKPV). Residue serine 1115 is modified to Phosphoserine. Disordered stretches follow at residues 1125–1156 (FVNN…YKYK) and 1168–1254 (YRRT…TRRN). Positions 1140-1150 (RTSKSHGERRP) are enriched in basic and acidic residues. 5 positions are modified to phosphoserine: serine 1173, serine 1176, serine 1195, serine 1202, and serine 1218. The Rho-GAP domain occupies 1262–1449 (MPLQDLVTAE…TFIQQCQFFF (188 aa)).

In terms of assembly, may interact with RASA1/p120GAP. In terms of tissue distribution, detected in skin fibroblasts (at protein level).

Its subcellular location is the cytoplasm. It is found in the cell membrane. Its function is as follows. GTPase-activating protein for Rho family members. This is Rho GTPase-activating protein 5 (ARHGAP5) from Homo sapiens (Human).